The primary structure comprises 316 residues: uncharacterized protein (316 aa).

This sequence belongs to the chlamydial CPn_0441/CT_007/TC_0275 family.

This is an uncharacterized protein from Chlamydia muridarum (strain MoPn / Nigg).